Here is a 477-residue protein sequence, read N- to C-terminus: Ubiquinone biosynthesis monooxygenase COQ6, mitochondrial (477 aa).

A mitochondrion-targeting transit peptide spans 1–25 (MLGVLRIQGALASAGQARLLSVRLL).

The protein belongs to the UbiH/COQ6 family. In terms of assembly, component of a multi-subunit COQ enzyme complex. Requires FAD as cofactor.

Its subcellular location is the mitochondrion inner membrane. It carries out the reaction a 4-hydroxy-3-(all-trans-polyprenyl)benzoate + 2 reduced [2Fe-2S]-[ferredoxin] + O2 + 2 H(+) = a 3,4-dihydroxy-5-(all-trans-polyprenyl)benzoate + 2 oxidized [2Fe-2S]-[ferredoxin] + H2O. It catalyses the reaction a 2-methoxy-6-(all-trans-polyprenyl)phenol + 2 reduced [2Fe-2S]-[ferredoxin] + O2 + 2 H(+) = a 2-methoxy-6-(all-trans-polyprenyl)benzene-1,4-diol + 2 oxidized [2Fe-2S]-[ferredoxin] + H2O. It participates in cofactor biosynthesis; ubiquinone biosynthesis. Its function is as follows. FAD-dependent monooxygenase required for two non-consecutive steps during ubiquinone biosynthesis. Required for the C5-ring hydroxylation during ubiquinone biosynthesis by catalyzing the hydroxylation of 4-hydroxy-3-(all-trans-polyprenyl)benzoic acid to 3,4-dihydroxy-5-(all-trans-polyprenyl)benzoic acid. Also acts downstream of coq4, for the C1-hydroxylation during ubiquinone biosynthesis by catalyzing the hydroxylation of 2-methoxy-6-(all-trans-polyprenyl)phenol to 2-methoxy-6-(all-trans-polyprenyl)benzene-1,4-diol. The electrons required for the hydroxylation reaction are funneled indirectly to Coq6 from NADPH via a ferredoxin/ferredoxin reductase system. The protein is Ubiquinone biosynthesis monooxygenase COQ6, mitochondrial of Drosophila melanogaster (Fruit fly).